We begin with the raw amino-acid sequence, 402 residues long: Probable peptidoglycan glycosyltransferase FtsW (402 aa).

Over 1 to 24 (MLYRLKLLLSGQNTKKERVRAKLE) the chain is Cytoplasmic. The chain crosses the membrane as a helical span at residues 25-45 (IDISIVFVMLGLLIFGWVMVT). Topologically, residues 46–63 (SASMVVALDDYNNPYFYS) are periplasmic. A helical membrane pass occupies residues 64–84 (IRQGFFAVIAIFLFLLALLVP). Topologically, residues 85 to 91 (TKNYEKN) are cytoplasmic. A helical membrane pass occupies residues 92–112 (YNAFFFIMLIVLVAVLVPGVG). Topologically, residues 113 to 121 (KSVNGARRW) are periplasmic. The chain crosses the membrane as a helical span at residues 122-142 (IPLIIINIQVAELAKLLAIIF). At 143–160 (FSGYIAENLPKMTNFKEG) the chain is on the cytoplasmic side. 2 helical membrane-spanning segments follow: residues 161–181 (ILTP…QPDF) and 182–202 (GSTV…GNKV). Position 203 (arginine 203) is a topological domain, cytoplasmic. Residues 204 to 224 (WYGLLIGAMLIMATMLVIISP) traverse the membrane as a helical segment. Over 225–284 (YRMHRITGFLHPWENANGSGYQLVQALIGFGRGGWFGDGLGNGVQKQFFLPEAHTDFITS) the chain is Periplasmic. Residues 285-305 (VIAEEIGVIGLMILLMVYLFI) traverse the membrane as a helical segment. The Cytoplasmic portion of the chain corresponds to 306–324 (VFRAMNIAKMAFELKRYYQ). Residues 325–345 (AFLSYGISFWIGFQVFVNIGV) form a helical membrane-spanning segment. The Periplasmic segment spans residues 346 to 357 (NTGLLPTKGLTL). A helical transmembrane segment spans residues 358–378 (PLISYGGSSLLIMCFTLGILV). Residues 379–402 (RVDFENKLLADTINPKYIYKKVRK) are Cytoplasmic-facing.

The protein belongs to the SEDS family. FtsW subfamily.

The protein localises to the cell inner membrane. It catalyses the reaction [GlcNAc-(1-&gt;4)-Mur2Ac(oyl-L-Ala-gamma-D-Glu-L-Lys-D-Ala-D-Ala)](n)-di-trans,octa-cis-undecaprenyl diphosphate + beta-D-GlcNAc-(1-&gt;4)-Mur2Ac(oyl-L-Ala-gamma-D-Glu-L-Lys-D-Ala-D-Ala)-di-trans,octa-cis-undecaprenyl diphosphate = [GlcNAc-(1-&gt;4)-Mur2Ac(oyl-L-Ala-gamma-D-Glu-L-Lys-D-Ala-D-Ala)](n+1)-di-trans,octa-cis-undecaprenyl diphosphate + di-trans,octa-cis-undecaprenyl diphosphate + H(+). It participates in cell wall biogenesis; peptidoglycan biosynthesis. In terms of biological role, peptidoglycan polymerase that is essential for cell division. This Francisella salina protein is Probable peptidoglycan glycosyltransferase FtsW.